A 272-amino-acid chain; its full sequence is Orotidine 5'-phosphate decarboxylase (272 aa).

K95 functions as the Proton donor in the catalytic mechanism.

This sequence belongs to the OMP decarboxylase family. Type 2 subfamily.

It catalyses the reaction orotidine 5'-phosphate + H(+) = UMP + CO2. Its pathway is pyrimidine metabolism; UMP biosynthesis via de novo pathway; UMP from orotate: step 2/2. The protein is Orotidine 5'-phosphate decarboxylase of Cupriavidus taiwanensis (strain DSM 17343 / BCRC 17206 / CCUG 44338 / CIP 107171 / LMG 19424 / R1) (Ralstonia taiwanensis (strain LMG 19424)).